We begin with the raw amino-acid sequence, 152 residues long: Putative RING finger protein 157L (152 aa).

Residues 111-146 (CVVCYENEICIKIQPCNHFVVCKSCFNRLNTCPMCR) form an RING-type zinc finger.

It belongs to the IIV-6 157L family.

This is Putative RING finger protein 157L from Invertebrate iridescent virus 6 (IIV-6).